The primary structure comprises 760 residues: 5-methyltetrahydropteroyltriglutamate--homocysteine methyltransferase (760 aa).

5-methyltetrahydropteroyltri-L-glutamate contacts are provided by residues 24–27 and Lys-118; that span reads RELK. Residues 437–439 and Glu-490 each bind L-homocysteine; that span reads IGS. L-methionine contacts are provided by residues 437–439 and Glu-490; that span reads IGS. 5-methyltetrahydropteroyltri-L-glutamate contacts are provided by residues 521 to 522 and Trp-567; that span reads RC. Asp-605 provides a ligand contact to L-homocysteine. Asp-605 contributes to the L-methionine binding site. Glu-611 serves as a coordination point for 5-methyltetrahydropteroyltri-L-glutamate. Zn(2+) contacts are provided by His-647, Cys-649, and Glu-671. Catalysis depends on His-700, which acts as the Proton donor. Cys-732 lines the Zn(2+) pocket.

This sequence belongs to the vitamin-B12 independent methionine synthase family. The cofactor is Zn(2+).

The enzyme catalyses 5-methyltetrahydropteroyltri-L-glutamate + L-homocysteine = tetrahydropteroyltri-L-glutamate + L-methionine. It functions in the pathway amino-acid biosynthesis; L-methionine biosynthesis via de novo pathway; L-methionine from L-homocysteine (MetE route): step 1/1. Its function is as follows. Catalyzes the transfer of a methyl group from 5-methyltetrahydrofolate to homocysteine resulting in methionine formation. This chain is 5-methyltetrahydropteroyltriglutamate--homocysteine methyltransferase, found in Mycobacterium leprae (strain TN).